The sequence spans 228 residues: MSPSLTWHDVIGQEKEQPYFKDTLAYVAAERRAGKTIYPPQKDIFNAFRLTELDQVKVVILGQDPYHGPNQAHGLSFSVLPGVPAPPSLGNIYKELVTDIPGFQRPNHGFLQSWAEQGVLLLNTVLTVEAGKAHSHANLGWETFTDRVIAALNEHREGVIFMLWGSHAQKKGRIINTERHYILKAPHPSPLSAHRGFLGCKHFSQANQLLQQQNQQPIDWQPKLPAVE.

D64 functions as the Proton acceptor in the catalytic mechanism.

The protein belongs to the uracil-DNA glycosylase (UDG) superfamily. UNG family.

It localises to the cytoplasm. The catalysed reaction is Hydrolyzes single-stranded DNA or mismatched double-stranded DNA and polynucleotides, releasing free uracil.. Its function is as follows. Excises uracil residues from the DNA which can arise as a result of misincorporation of dUMP residues by DNA polymerase or due to deamination of cytosine. The sequence is that of Uracil-DNA glycosylase from Yersinia pseudotuberculosis serotype IB (strain PB1/+).